The chain runs to 739 residues: Phosphoribosylformylglycinamidine synthase subunit PurL (739 aa).

The active site involves His-54. Residues Tyr-57 and Lys-96 each coordinate ATP. Glu-98 is a Mg(2+) binding site. Residues 99–102 (SHNH) and Arg-121 each bind substrate. His-100 functions as the Proton acceptor in the catalytic mechanism. Asp-122 lines the Mg(2+) pocket. Gln-245 is a substrate binding site. Asp-273 serves as a coordination point for Mg(2+). Substrate is bound at residue 317–319 (ESQ). ATP contacts are provided by Asp-500 and Gly-537. Asn-538 is a binding site for Mg(2+). Ser-540 serves as a coordination point for substrate.

This sequence belongs to the FGAMS family. In terms of assembly, monomer. Part of the FGAM synthase complex composed of 1 PurL, 1 PurQ and 2 PurS subunits.

It localises to the cytoplasm. The catalysed reaction is N(2)-formyl-N(1)-(5-phospho-beta-D-ribosyl)glycinamide + L-glutamine + ATP + H2O = 2-formamido-N(1)-(5-O-phospho-beta-D-ribosyl)acetamidine + L-glutamate + ADP + phosphate + H(+). It functions in the pathway purine metabolism; IMP biosynthesis via de novo pathway; 5-amino-1-(5-phospho-D-ribosyl)imidazole from N(2)-formyl-N(1)-(5-phospho-D-ribosyl)glycinamide: step 1/2. Functionally, part of the phosphoribosylformylglycinamidine synthase complex involved in the purines biosynthetic pathway. Catalyzes the ATP-dependent conversion of formylglycinamide ribonucleotide (FGAR) and glutamine to yield formylglycinamidine ribonucleotide (FGAM) and glutamate. The FGAM synthase complex is composed of three subunits. PurQ produces an ammonia molecule by converting glutamine to glutamate. PurL transfers the ammonia molecule to FGAR to form FGAM in an ATP-dependent manner. PurS interacts with PurQ and PurL and is thought to assist in the transfer of the ammonia molecule from PurQ to PurL. The polypeptide is Phosphoribosylformylglycinamidine synthase subunit PurL (Bacillus mycoides (strain KBAB4) (Bacillus weihenstephanensis)).